The following is a 104-amino-acid chain: uncharacterized protein (104 aa).

The next 2 membrane-spanning stretches (helical) occupy residues 53-73 (IWGI…NWDF) and 74-94 (ILNL…LILI).

The protein resides in the cell membrane. This is an uncharacterized protein from Methanocaldococcus jannaschii (strain ATCC 43067 / DSM 2661 / JAL-1 / JCM 10045 / NBRC 100440) (Methanococcus jannaschii).